A 162-amino-acid chain; its full sequence is Small ribosomal subunit protein uS5 (162 aa).

The region spanning 11–74 (LTDRVVHISR…EQAKKNLIKV (64 aa)) is the S5 DRBM domain.

This sequence belongs to the universal ribosomal protein uS5 family. As to quaternary structure, part of the 30S ribosomal subunit. Contacts proteins S4 and S8.

Its function is as follows. With S4 and S12 plays an important role in translational accuracy. Functionally, located at the back of the 30S subunit body where it stabilizes the conformation of the head with respect to the body. The polypeptide is Small ribosomal subunit protein uS5 (Pelobacter propionicus (strain DSM 2379 / NBRC 103807 / OttBd1)).